A 297-amino-acid chain; its full sequence is GTPase Era (297 aa).

One can recognise an Era-type G domain in the interval 7–174 (RSGFVSIVGR…VQLVHGLLPE (168 aa)). Residues 15-22 (GRPNVGKS) are G1. 15 to 22 (GRPNVGKS) lines the GTP pocket. The segment at 41–45 (QTTRN) is G2. Residues 62-65 (DTPG) form a G3 region. GTP is bound by residues 62 to 66 (DTPGI) and 124 to 127 (NKID). Positions 124–127 (NKID) are G4. A G5 region spans residues 153-155 (VSA). Residues 205–282 (THDEVPYSTA…FLELFVRVSG (78 aa)) enclose the KH type-2 domain.

Belongs to the TRAFAC class TrmE-Era-EngA-EngB-Septin-like GTPase superfamily. Era GTPase family. Monomer.

The protein resides in the cytoplasm. It localises to the cell inner membrane. Its function is as follows. An essential GTPase that binds both GDP and GTP, with rapid nucleotide exchange. Plays a role in 16S rRNA processing and 30S ribosomal subunit biogenesis and possibly also in cell cycle regulation and energy metabolism. This is GTPase Era from Geobacter sp. (strain M21).